The sequence spans 63 residues: Large ribosomal subunit protein bL35 (63 aa).

Belongs to the bacterial ribosomal protein bL35 family.

This is Large ribosomal subunit protein bL35 from Campylobacter concisus (strain 13826).